The primary structure comprises 307 residues: Transcription initiation factor IIB 5 (307 aa).

Residues 19–47 (TTEPCPECGGPVRTNSAETVCADCGLIID) form a TFIIB-type zinc finger. Positions 23, 26, 39, and 42 each coordinate Zn(2+). 2 stretches are compositionally biased toward basic and acidic residues: residues 54–66 (GPEW…DTAK) and 107–121 (MRRE…STKE). The interval 54–121 (GPEWHRDDAD…SRGRWRSTKE (68 aa)) is disordered. 2 consecutive repeat copies span residues 129 to 212 (TEIR…NEEL) and 223 to 304 (QFVP…RLLS).

Belongs to the TFIIB family.

In terms of biological role, stabilizes TBP binding to an archaeal box-A promoter. Also responsible for recruiting RNA polymerase II to the pre-initiation complex (DNA-TBP-TFIIB). The sequence is that of Transcription initiation factor IIB 5 from Halobacterium salinarum (strain ATCC 700922 / JCM 11081 / NRC-1) (Halobacterium halobium).